We begin with the raw amino-acid sequence, 309 residues long: Protein US16 (309 aa).

Transmembrane regions (helical) follow at residues 50 to 70 (GLLL…SLVF), 85 to 105 (VVWA…FVYF), 128 to 148 (LVLL…TCAC), 154 to 174 (VLTS…VVFI), 185 to 205 (FALI…IVFT), 210 to 230 (WPLR…AGHF), and 245 to 265 (DVAH…FLIL).

It belongs to the cytomegalovirus US12 family.

The protein resides in the host membrane. It is found in the host cytoplasm. This chain is Protein US16 (US16), found in Human cytomegalovirus (strain Merlin) (HHV-5).